Consider the following 51-residue polypeptide: UPF0391 membrane protein PsycPRwf_2202 (51 aa).

2 helical membrane passes run 6 to 26 (IIFAVIALLASLLGFGGVAGL) and 27 to 47 (SQNFAYIFLVVAVILFIIGFI).

Belongs to the UPF0391 family.

The protein resides in the cell membrane. The protein is UPF0391 membrane protein PsycPRwf_2202 of Psychrobacter sp. (strain PRwf-1).